The primary structure comprises 276 residues: Digeranylgeranylglyceryl phosphate synthase (276 aa).

A run of 8 helical transmembrane segments spans residues 12-34 (PHNC…GSVP), 38-60 (ILIL…NDYF), 84-104 (ALWY…LISL), 107-127 (FAFA…LKPL), 146-166 (GAIA…AFLV), 202-222 (VAAF…KAGV), 224-244 (VGYY…YLIL), and 256-276 (QLLL…AALM).

This sequence belongs to the UbiA prenyltransferase family. DGGGP synthase subfamily. Mg(2+) is required as a cofactor.

The protein localises to the cell membrane. It carries out the reaction sn-3-O-(geranylgeranyl)glycerol 1-phosphate + (2E,6E,10E)-geranylgeranyl diphosphate = 2,3-bis-O-(geranylgeranyl)-sn-glycerol 1-phosphate + diphosphate. The protein operates within membrane lipid metabolism; glycerophospholipid metabolism. In terms of biological role, prenyltransferase that catalyzes the transfer of the geranylgeranyl moiety of geranylgeranyl diphosphate (GGPP) to the C2 hydroxyl of (S)-3-O-geranylgeranylglyceryl phosphate (GGGP). This reaction is the second ether-bond-formation step in the biosynthesis of archaeal membrane lipids. The sequence is that of Digeranylgeranylglyceryl phosphate synthase from Thermococcus gammatolerans (strain DSM 15229 / JCM 11827 / EJ3).